The sequence spans 430 residues: Serine--tRNA ligase (430 aa).

237-239 is a binding site for L-serine; sequence TAE. Position 268-270 (268-270) interacts with ATP; sequence RAE. E291 is a binding site for L-serine. Residue 355 to 358 participates in ATP binding; sequence EISS. Residue S391 participates in L-serine binding.

It belongs to the class-II aminoacyl-tRNA synthetase family. Type-1 seryl-tRNA synthetase subfamily. As to quaternary structure, homodimer. The tRNA molecule binds across the dimer.

The protein resides in the cytoplasm. The enzyme catalyses tRNA(Ser) + L-serine + ATP = L-seryl-tRNA(Ser) + AMP + diphosphate + H(+). The catalysed reaction is tRNA(Sec) + L-serine + ATP = L-seryl-tRNA(Sec) + AMP + diphosphate + H(+). Its pathway is aminoacyl-tRNA biosynthesis; selenocysteinyl-tRNA(Sec) biosynthesis; L-seryl-tRNA(Sec) from L-serine and tRNA(Sec): step 1/1. In terms of biological role, catalyzes the attachment of serine to tRNA(Ser). Is also able to aminoacylate tRNA(Sec) with serine, to form the misacylated tRNA L-seryl-tRNA(Sec), which will be further converted into selenocysteinyl-tRNA(Sec). The protein is Serine--tRNA ligase of Serratia proteamaculans (strain 568).